Here is a 136-residue protein sequence, read N- to C-terminus: MSALVYFSSSSENTHRFMQRLGLPATRIPLNERERIRVDEPYILVVPSYGGGGMAGAVPRQVIRFLNDEHNRARIRGVIASGNRNFGDAWGCAGDVIAQKCGVPWLYRFELMGTQRDIDHVRKGVNEFWRQQTRSA.

The protein belongs to the NrdI family.

In terms of biological role, probably involved in ribonucleotide reductase function. In Salmonella arizonae (strain ATCC BAA-731 / CDC346-86 / RSK2980), this protein is Protein NrdI.